A 111-amino-acid chain; its full sequence is MKISYFIRRGKKTSRRSHFIKMKKNIITTQLFKPDNAFIFFSGIHGSVNRATYKYKISKTFGRFLAHISCLICILSKRIFVLSFSVIGSFCHPSIVHFDCLLFFLDTTPCL.

The helical transmembrane segment at 60–80 (TFGRFLAHISCLICILSKRIF) threads the bilayer.

It is found in the mitochondrion membrane. This is an uncharacterized protein from Arabidopsis thaliana (Mouse-ear cress).